Reading from the N-terminus, the 364-residue chain is Spermatogenesis-associated protein 22 (364 aa).

Composition is skewed to polar residues over residues 1-13, 30-48, 73-108, 137-169, and 177-189; these read MKRNLNENSTRST, QPLTSNPCTNDPGISNASD, KTVNTGQIPHSVSNSLRSQDSLSKPIQSNAGSSKSD, LMTNNGINSGPINLGAQQQKQLRVSESTNLPNQ, and QTKSSEIPGSTMR. Disordered regions lie at residues 1-51 and 70-189; these read MKRN…DNYD and PLTK…STMR.

Component of a multiprotein complex with MEIOB and RPA2. Interacts with MEIOB. Interacts with the complex BRME1:HSF2BP:BRCA2.

It is found in the chromosome. In terms of biological role, meiosis-specific protein required for homologous recombination in meiosis I. The protein is Spermatogenesis-associated protein 22 (SPATA22) of Bos taurus (Bovine).